A 1133-amino-acid polypeptide reads, in one-letter code: Exportin-4 (1133 aa).

This sequence belongs to the exportin family. As to quaternary structure, interacts with Ran and cargo proteins in a GTP-dependent manner.

The protein localises to the cytoplasm. The protein resides in the nucleus. Mediates the nuclear export of proteins (cargos). In the nucleus binds cooperatively to its cargo and to the GTPase Ran in its active GTP-bound form. Docking of this trimeric complex to the nuclear pore complex (NPC) is mediated through binding to nucleoporins. Upon transit of a nuclear export complex into the cytoplasm, disassembling of the complex and hydrolysis of Ran-GTP to Ran-GDP cause release of the cargo from the export receptor. Xpo4 then return to the nuclear compartment and mediate another round of transport. The directionality of nuclear export is thought to be conferred by an asymmetric distribution of the GTP- and GDP-bound forms of Ran between the cytoplasm and nucleus. This is Exportin-4 (xpo4) from Dictyostelium discoideum (Social amoeba).